Here is a 428-residue protein sequence, read N- to C-terminus: Involucrin (428 aa).

Disordered regions lie at residues 1–128 (MSQQ…EEKK) and 140–398 (KRDD…GQAQ). Over residues 56–76 (PSKHEEKHVTIVKGVPEHECE) the composition is skewed to basic and acidic residues. The span at 77–92 (QQQQAQGQERQQQHWG) shows a compositional bias: low complexity. Composition is skewed to basic and acidic residues over residues 107–117 (LKQEEAQREKQ), 162–174 (QLKHLEQQEKPLE), and 192–208 (QLKHLEEQKGQLKHLEQ). Over residues 209–218 (QEGQLELPEQ) the composition is skewed to low complexity. The segment covering 220–297 (DQPKHLEQLE…CEGQLEHLEQ (78 aa)) has biased composition (basic and acidic residues). The span at 298 to 311 (QEGQLELPEQQVGQ) shows a compositional bias: low complexity. Composition is skewed to basic and acidic residues over residues 313–327 (KHLEQEEKQLEHPEQ), 352–366 (KHLEQQEKQLEHPEQ), and 374–385 (QLKDLEQQERQL).

Belongs to the involucrin family. In terms of assembly, directly or indirectly cross-linked to cornifelin (CNFN). In terms of processing, substrate of transglutaminase. Specific glutamines or lysines are cross-linked to keratins, desmoplakin and to inter involucrin molecules. In terms of tissue distribution, keratinocytes of epidermis and other stratified squamous epithelia.

It is found in the cytoplasm. Its function is as follows. Part of the insoluble cornified cell envelope (CE) of stratified squamous epithelia. The polypeptide is Involucrin (IVL) (Cebus albifrons (White-fronted capuchin)).